Here is a 157-residue protein sequence, read N- to C-terminus: Small ribosomal subunit protein uS7 (157 aa).

The protein belongs to the universal ribosomal protein uS7 family. In terms of assembly, part of the 30S ribosomal subunit. Contacts proteins S9 and S11.

Its function is as follows. One of the primary rRNA binding proteins, it binds directly to 16S rRNA where it nucleates assembly of the head domain of the 30S subunit. Is located at the subunit interface close to the decoding center, probably blocks exit of the E-site tRNA. The protein is Small ribosomal subunit protein uS7 of Chlamydia muridarum (strain MoPn / Nigg).